A 605-amino-acid polypeptide reads, in one-letter code: YTH domain-containing protein ECT4 (605 aa).

2 disordered regions span residues 249-274 (GVASSYSKANNNVPATRNQNSSSNSH) and 357-384 (ELNRGPRAKGTKATEEVSSEEVKKQTFD). Polar residues predominate over residues 256 to 274 (KANNNVPATRNQNSSSNSH). Positions 368–383 (KATEEVSSEEVKKQTF) are enriched in basic and acidic residues. Residues 414–551 (AKFFIIKSYS…EQGLKVVKIF (138 aa)) form the YTH domain. Residues 420–422 (KSY), Asp426, 436–437 (WA), Asn469, Trp493, Trp498, and Trp506 contribute to the RNA site. The disordered stretch occupies residues 580 to 605 (KQQQSQKQVWEGKTNDEKPGTVDSTM).

As to expression, expressed in the shoot apex, at the sites of leaf formation, and in emerging leaves.

Its subcellular location is the cytoplasm. Functionally, specifically recognizes and binds N6-methyladenosine (m6A)-containing RNAs, and regulates mRNA stability. M6A is a modification present at internal sites of mRNAs and some non-coding RNAs and plays a role in mRNA stability and processing. Required for the correct timing of leaf formation and normal leaf morphology. The chain is YTH domain-containing protein ECT4 from Arabidopsis thaliana (Mouse-ear cress).